The chain runs to 1048 residues: Dyslexia-associated protein KIAA0319-like protein (1048 aa).

The Cytoplasmic segment spans residues 1–29 (MEKRLGVKPSPASWVLPGYCWQTSVKLPR). The chain crosses the membrane as a helical span at residues 30-50 (SLYLLYSFFCFSVLWLSTDAD). One can recognise an MANSC domain in the interval 49–127 (ADESRCQQGK…PFRTDSSNSM (79 aa)). Topologically, residues 51 to 928 (ESRCQQGKTL…RDGDSNCEWS (878 aa)) are extracellular. Disordered stretches follow at residues 198–218 (HGAM…LSPT) and 231–300 (SFTS…STSA). The span at 231-241 (SFTSNHTTQTP) shows a compositional bias: polar residues. Asn-246 carries an N-linked (GlcNAc...) asparagine glycan. 2 stretches are compositionally biased toward low complexity: residues 247–261 (VSIH…SPVS) and 287–300 (ATPT…STSA). PKD domains follow at residues 309-400 (VVSA…VKPE), 408-497 (VAVV…VNKA), 503-593 (VANA…VQPE), 599-687 (QADA…VKEE), and 693-784 (VAKI…VKPD). Asn-394 is a glycosylation site (N-linked (GlcNAc...) asparagine). The segment at 593 to 623 (ENNKPPQADAGPDKELTLPVDSTTLDGSKST) is disordered. A helical transmembrane segment spans residues 929–949 (VLYVIIASFVIVVALGILSWT). Over 950–1048 (TICCCKRQKG…KSRSAREEIL (99 aa)) the chain is Cytoplasmic. Thr-973 carries the post-translational modification Phosphothreonine. Ser-977 is subject to Phosphoserine. The segment at 980-1007 (LKPTSRAGSKQKGPTLSSSLMHSESELD) is disordered. The segment covering 985–994 (RAGSKQKGPT) has biased composition (polar residues). Residues Ser-1008 and Ser-1030 each carry the phosphoserine modification. A disordered region spans residues 1024 to 1048 (LYGQNGSVPNGQTPLKSRSAREEIL). Residues 1027-1039 (QNGSVPNGQTPLK) show a composition bias toward polar residues. Position 1036 is a phosphothreonine (Thr-1036).

Interacts with RTN4R. N-glycosylated.

It localises to the cytoplasmic granule membrane. Its subcellular location is the golgi apparatus membrane. The protein resides in the golgi apparatus. The protein localises to the trans-Golgi network membrane. It is found in the cell membrane. In terms of biological role, possible role in axon guidance through interaction with RTN4R. Functionally, (Microbial infection) Acts as a receptor for adeno-associated virus and is involved in adeno-associated virus infection through endocytosis system. In Mus musculus (Mouse), this protein is Dyslexia-associated protein KIAA0319-like protein.